The primary structure comprises 171 residues: S-ribosylhomocysteine lyase (171 aa).

Fe cation contacts are provided by H54, H58, and C128.

It belongs to the LuxS family. In terms of assembly, homodimer. Requires Fe cation as cofactor.

The catalysed reaction is S-(5-deoxy-D-ribos-5-yl)-L-homocysteine = (S)-4,5-dihydroxypentane-2,3-dione + L-homocysteine. Its function is as follows. Involved in the synthesis of autoinducer 2 (AI-2) which is secreted by bacteria and is used to communicate both the cell density and the metabolic potential of the environment. The regulation of gene expression in response to changes in cell density is called quorum sensing. Catalyzes the transformation of S-ribosylhomocysteine (RHC) to homocysteine (HC) and 4,5-dihydroxy-2,3-pentadione (DPD). This chain is S-ribosylhomocysteine lyase, found in Pectobacterium atrosepticum (strain SCRI 1043 / ATCC BAA-672) (Erwinia carotovora subsp. atroseptica).